The primary structure comprises 837 residues: ABC transporter A family member 8 (837 aa).

7 consecutive transmembrane segments (helical) span residues Y29–I49, V244–L264, L303–G323, F326–F346, V356–N376, G393–L413, and L455–A475. The 235-residue stretch at I516–I750 folds into the ABC transporter domain. Residue G553 to S560 participates in ATP binding.

It belongs to the ABC transporter superfamily. ABCA family.

The protein resides in the membrane. In Dictyostelium discoideum (Social amoeba), this protein is ABC transporter A family member 8 (abcA8).